The primary structure comprises 341 residues: HTH-type transcriptional repressor PurR (341 aa).

The HTH lacI-type domain maps to 2–56 (ATIKDVAKRANVSTTTVSHVINKTRFVAEETRNAVWAAIKELHYSPSAVARSLKV). Residues 4-23 (IKDVAKRANVSTTTVSHVIN) constitute a DNA-binding region (H-T-H motif). Residues 48–56 (SAVARSLKV) mediate DNA binding. Residues tyrosine 73, arginine 190, threonine 192, phenylalanine 221, and aspartate 275 each coordinate hypoxanthine.

As to quaternary structure, homodimer.

Its pathway is purine metabolism; purine nucleotide biosynthesis [regulation]. In terms of biological role, is the main repressor of the genes involved in the de novo synthesis of purine nucleotides, regulating purB, purC, purEK, purF, purHD, purL, purMN and guaBA expression. PurR is allosterically activated to bind its cognate DNA by binding the purine corepressors, hypoxanthine or guanine, thereby effecting transcription repression. This chain is HTH-type transcriptional repressor PurR, found in Escherichia coli (strain UTI89 / UPEC).